A 517-amino-acid chain; its full sequence is E3 ubiquitin-protein ligase TRIM65 (517 aa).

Ala-2 bears the N-acetylalanine mark. The RING-type zinc finger occupies 12–51; the sequence is CAICLGLYQDPVTLPCGHNFCGACIRDWWDRCGKACPECR. Residues 75 to 94 are disordered; the sequence is AGPARDPGPDPGPGPDPAAR. The B box-type zinc finger occupies 90–137; sequence DPAARCPRHGRPLELFCRTEGRCVCSVCTVRECRLHERALLDAERLKR. Zn(2+) is bound by residues Cys-95, His-98, Cys-117, and His-125. Residues 139–227 adopt a coiled-coil conformation; it reads AQLRASLEVT…QRLRVHLEAV (89 aa). Ser-185 is modified (phosphoserine). A (Microbial infection) Glycyl lysine isopeptide (Lys-Gly) (interchain with G-Cter in ubiquitin) cross-link involves residue Lys-206. One can recognise a B30.2/SPRY domain in the interval 313-506; it reads APVPSTVCPL…LTLCHQPGAV (194 aa).

It belongs to the TRIM/RBCC family. As to quaternary structure, homo-multimerizes. Interacts with ARRDC4.

The protein localises to the cytoplasm. The catalysed reaction is S-ubiquitinyl-[E2 ubiquitin-conjugating enzyme]-L-cysteine + [acceptor protein]-L-lysine = [E2 ubiquitin-conjugating enzyme]-L-cysteine + N(6)-ubiquitinyl-[acceptor protein]-L-lysine.. It participates in protein modification; protein ubiquitination. In terms of biological role, E3 ubiquitin ligase that plays a role in several processes including innate immnity, autophagy or inflammation. Negatively regulates miRNAs by modulating the ubiquitination and stability of TNRC6A, a protein involved in RNA-mediated gene silencing by both micro-RNAs (miRNAs) and short interfering RNAs. This ubiquitination results in the suppressed expression of miR-138-5p leading to increased autophagy. Upon enteroviral infection, promotes 'Lys-63'-mediated ubiquitination activation of IFIH1/MDA5 leading to innate signaling cascade. Mechanistically, selectively recognizes MDA5 filaments that occur on dsRNAs. Plays also a role in limitation of inflammation through different mechanisms. First, promotes 'Lys-48'-mediated ubiquitination of VCAM1 leading to its degradation and limitation of LPS-induced lung inflammation. In addition, negatively regulates inflammasome activation by promoting 'lys48'-linked ubiquitination of NLRP3 which is critical for the inhibition of NLRP3 inflammasome activation in resting macrophages. The protein is E3 ubiquitin-protein ligase TRIM65 (TRIM65) of Homo sapiens (Human).